The primary structure comprises 726 residues: Putative tyrosine-protein kinase AmsA (726 aa).

2 helical membrane-spanning segments follow: residues 32 to 52 and 425 to 445; these read WMIV…SLFA and ILIV…LVLM.

Belongs to the etk/wzc family.

The protein resides in the cell inner membrane. It catalyses the reaction L-tyrosyl-[protein] + ATP = O-phospho-L-tyrosyl-[protein] + ADP + H(+). It participates in glycan metabolism; exopolysaccharide biosynthesis. Functionally, involved in the biosynthesis of amylovoran which functions as a virulence factor. This chain is Putative tyrosine-protein kinase AmsA (amsA), found in Erwinia amylovora (Fire blight bacteria).